A 194-amino-acid chain; its full sequence is ATP-dependent Clp protease proteolytic subunit 3 (194 aa).

Residue Ser-96 is the Nucleophile of the active site. His-121 is a catalytic residue.

It belongs to the peptidase S14 family. In terms of assembly, fourteen ClpP subunits assemble into 2 heptameric rings which stack back to back to give a disk-like structure with a central cavity, resembling the structure of eukaryotic proteasomes.

It localises to the cytoplasm. The catalysed reaction is Hydrolysis of proteins to small peptides in the presence of ATP and magnesium. alpha-casein is the usual test substrate. In the absence of ATP, only oligopeptides shorter than five residues are hydrolyzed (such as succinyl-Leu-Tyr-|-NHMec, and Leu-Tyr-Leu-|-Tyr-Trp, in which cleavage of the -Tyr-|-Leu- and -Tyr-|-Trp bonds also occurs).. Its function is as follows. Cleaves peptides in various proteins in a process that requires ATP hydrolysis. Has a chymotrypsin-like activity. Plays a major role in the degradation of misfolded proteins. The chain is ATP-dependent Clp protease proteolytic subunit 3 from Prochlorococcus marinus (strain NATL2A).